Reading from the N-terminus, the 340-residue chain is MSVWALFAFFSLFLSLSVRGSAEQCGRQAGDALCPGGLCCSSYGWCGTTVDYCGIGCQSQCDGGGGGDGGDDGCDGGDDGGGDGDDGYLSDIIPKSKFDALLKFRNDARCPAAGFYTYNAFISAAKEFPDFGNTGDDLMRKREIAAFLGQTSHETTGGWPDAPCGPYAWGYCYLKEINCQPYCDPSSNYQCVAGKQYCGRGPIQLSWNYNYGLCGDDLKLPLLQEPELVETDPVISFKTAIWFWMKPQSPKPSCHAVITGNWTPSAADLEAGRVPGYGVITNIINGGIECGQGGPNAANEDRIGFYKKYCDSLGTTYGSNLDCYQQRPFGYGLSGLKDTM.

The N-terminal stretch at 1 to 22 (MSVWALFAFFSLFLSLSVRGSA) is a signal peptide. Residues 23–63 (EQCGRQAGDALCPGGLCCSSYGWCGTTVDYCGIGCQSQCDG) form the Chitin-binding type-1 domain. Disulfide bonds link cysteine 25–cysteine 40, cysteine 34–cysteine 46, cysteine 39–cysteine 53, and cysteine 57–cysteine 61. The segment at 64-85 (GGGGDGGDDGCDGGDDGGGDGD) is spacer. The segment at 86–340 (DGYLSDIIPK…YGLSGLKDTM (255 aa)) is chitinase. 3 disulfides stabilise this stretch: cysteine 110/cysteine 172, cysteine 183/cysteine 191, and cysteine 290/cysteine 323. Residue glutamate 154 is the Proton donor of the active site.

The protein belongs to the glycosyl hydrolase 19 family. Chitinase class I subfamily.

The catalysed reaction is Random endo-hydrolysis of N-acetyl-beta-D-glucosaminide (1-&gt;4)-beta-linkages in chitin and chitodextrins.. Its function is as follows. Defense against chitin-containing fungal pathogens. This is Acidic endochitinase WIN6 (WIN6) from Populus trichocarpa (Western balsam poplar).